The following is a 473-amino-acid chain: Ribulose bisphosphate carboxylase large chain 2 (473 aa).

Substrate is bound by residues Asn116 and Thr166. Residue Lys168 is the Proton acceptor of the active site. Residue Lys170 participates in substrate binding. Mg(2+) contacts are provided by Lys194, Asp196, and Glu197. Residue Lys194 is modified to N6-carboxylysine. His287 serves as the catalytic Proton acceptor. Substrate contacts are provided by Arg288, His320, and Ser372.

This sequence belongs to the RuBisCO large chain family. Type I subfamily. Heterohexadecamer of 8 large chains and 8 small chains. Mg(2+) serves as cofactor.

It catalyses the reaction 2 (2R)-3-phosphoglycerate + 2 H(+) = D-ribulose 1,5-bisphosphate + CO2 + H2O. The enzyme catalyses D-ribulose 1,5-bisphosphate + O2 = 2-phosphoglycolate + (2R)-3-phosphoglycerate + 2 H(+). Its function is as follows. RuBisCO catalyzes two reactions: the carboxylation of D-ribulose 1,5-bisphosphate, the primary event in carbon dioxide fixation, as well as the oxidative fragmentation of the pentose substrate. Both reactions occur simultaneously and in competition at the same active site. The sequence is that of Ribulose bisphosphate carboxylase large chain 2 from Acidithiobacillus ferrooxidans (strain ATCC 23270 / DSM 14882 / CIP 104768 / NCIMB 8455) (Ferrobacillus ferrooxidans (strain ATCC 23270)).